We begin with the raw amino-acid sequence, 263 residues long: Endonuclease 8 (263 aa).

Pro2 serves as the catalytic Schiff-base intermediate with DNA. Glu3 functions as the Proton donor in the catalytic mechanism. The active-site Proton donor; for beta-elimination activity is the Lys53. Residues Gln70, Arg125, and Asn169 each coordinate DNA. An FPG-type zinc finger spans residues 229–263 (KVFHRDGEPCERCGGIIEKTTLSSRPFYWCPGCQH). Arg253 functions as the Proton donor; for delta-elimination activity in the catalytic mechanism.

It belongs to the FPG family. It depends on Zn(2+) as a cofactor.

It catalyses the reaction 2'-deoxyribonucleotide-(2'-deoxyribose 5'-phosphate)-2'-deoxyribonucleotide-DNA = a 3'-end 2'-deoxyribonucleotide-(2,3-dehydro-2,3-deoxyribose 5'-phosphate)-DNA + a 5'-end 5'-phospho-2'-deoxyribonucleoside-DNA + H(+). Its function is as follows. Involved in base excision repair of DNA damaged by oxidation or by mutagenic agents. Acts as a DNA glycosylase that recognizes and removes damaged bases. Has a preference for oxidized pyrimidines, such as thymine glycol, 5,6-dihydrouracil and 5,6-dihydrothymine. Has AP (apurinic/apyrimidinic) lyase activity and introduces nicks in the DNA strand. Cleaves the DNA backbone by beta-delta elimination to generate a single-strand break at the site of the removed base with both 3'- and 5'-phosphates. The polypeptide is Endonuclease 8 (Escherichia coli (strain UTI89 / UPEC)).